The following is a 137-amino-acid chain: Nucleoside diphosphate kinase (137 aa).

Positions 11, 59, 87, 93, 104, and 114 each coordinate ATP. The active-site Pros-phosphohistidine intermediate is the histidine 117.

This sequence belongs to the NDK family. In terms of assembly, homotetramer. Mg(2+) serves as cofactor.

The protein resides in the cytoplasm. The enzyme catalyses a 2'-deoxyribonucleoside 5'-diphosphate + ATP = a 2'-deoxyribonucleoside 5'-triphosphate + ADP. It carries out the reaction a ribonucleoside 5'-diphosphate + ATP = a ribonucleoside 5'-triphosphate + ADP. Functionally, major role in the synthesis of nucleoside triphosphates other than ATP. The ATP gamma phosphate is transferred to the NDP beta phosphate via a ping-pong mechanism, using a phosphorylated active-site intermediate. This Frankia alni (strain DSM 45986 / CECT 9034 / ACN14a) protein is Nucleoside diphosphate kinase.